The sequence spans 894 residues: Leucine--tRNA ligase, mitochondrial (894 aa).

The N-terminal 9 residues, 1 to 9, are a transit peptide targeting the mitochondrion; the sequence is MLSRPSSRF. Residues 56-66 carry the 'HIGH' region motif; it reads PYPSGALHIGH. The short motif at 646–650 is the 'KMSKS' region element; it reads KMSKS. ATP is bound at residue Lys649.

It belongs to the class-I aminoacyl-tRNA synthetase family.

It localises to the mitochondrion matrix. It catalyses the reaction tRNA(Leu) + L-leucine + ATP = L-leucyl-tRNA(Leu) + AMP + diphosphate. In terms of biological role, catalyzes the attachment of leucine to tRNA(Leu) in the mitochondrion. The polypeptide is Leucine--tRNA ligase, mitochondrial (NAM2) (Saccharomyces cerevisiae (strain ATCC 204508 / S288c) (Baker's yeast)).